The following is a 164-amino-acid chain: Transcriptional regulator MraZ (164 aa).

2 consecutive SpoVT-AbrB domains span residues 7–60 (HYTN…EIDG) and 83–126 (SEIL…EPGR). The interval 144-164 (QLSARHAAPDAPPLRSHGARE) is disordered.

It belongs to the MraZ family. As to quaternary structure, forms oligomers.

It localises to the cytoplasm. It is found in the nucleoid. This is Transcriptional regulator MraZ from Methylocella silvestris (strain DSM 15510 / CIP 108128 / LMG 27833 / NCIMB 13906 / BL2).